A 171-amino-acid chain; its full sequence is Myelin basic protein (171 aa).

Ala-1 carries the N-acetylalanine modification. A compositionally biased stretch (basic residues) spans 1–12 (ASQKRPSQRHGS). The disordered stretch occupies residues 1–171 (ASQKRPSQRH…SRSGSPMARR (171 aa)). 2 positions are modified to phosphoserine: Ser-7 and Ser-12. Tyr-14 carries the post-translational modification Phosphotyrosine. Ser-19 is modified (phosphoserine). A Phosphothreonine modification is found at Thr-20. Residues Arg-25 and Arg-31 each carry the citrulline modification. Thr-35 is modified (phosphothreonine). Ser-39 is subject to Phosphoserine. Omega-N-methylarginine occurs at positions 42 and 48. Residue Ser-55 is modified to Phosphoserine. The residue at position 66 (Thr-66) is a Phosphothreonine. Phosphotyrosine is present on Tyr-68. 2 positions are modified to phosphothreonine: Thr-95 and Thr-98. Gln-103 carries the post-translational modification Deamidated glutamine. The residue at position 107 (Arg-107) is an Omega-N-methylarginine; alternate. Arg-107 carries the post-translational modification Symmetric dimethylarginine; alternate. Ser-115 carries the phosphoserine modification. At Lys-122 the chain carries N6-acetyllysine. Arg-130 carries the post-translational modification Citrulline. The residue at position 148 (Gln-148) is a Deamidated glutamine. Citrulline is present on Arg-160. Ser-162 bears the Phosphoserine mark. Ser-166 is modified (phosphoserine; by UHMK1). Arg-171 carries the citrulline modification.

This sequence belongs to the myelin basic protein family. As to quaternary structure, homodimer. In terms of processing, as in other animals, several charge isomers may be produced as a result of optional post-translational modifications, such as phosphorylation of serine or threonine residues, deamidation of glutamine or asparagine residues, citrullination and methylation of arginine residues. Post-translationally, phosphorylated by TAOK2, VRK2, MAPK11, MAPK12, MAPK14 and MINK1. Proteolytically cleaved in B cell lysosomes by cathepsin CTSG which degrades the major immunogenic MBP epitope and prevents the activation of MBP-specific autoreactive T cells.

The protein resides in the myelin membrane. Its function is as follows. Is, with PLP, the most abundant protein component of the myelin membrane in the CNS. Has a role in both the formation and stabilization of this compact multilayer arrangement of bilayers. Each splice variant and charge isomer may have a specialized function in the assembly of an optimized, biochemically functional myelin membrane. In Sus scrofa (Pig), this protein is Myelin basic protein (MBP).